We begin with the raw amino-acid sequence, 228 residues long: Ankyrin repeat domain-containing protein 46 (228 aa).

4 ANK repeats span residues 11–40, 44–73, 77–103, and 107–138; these read QTNV…DPNI, RGRT…DLLA, QGNT…KIDI, and QGAT…EVKG. The helical transmembrane segment at 195–215 threads the bilayer; sequence VLLLIFVIALLSLGIAYYVSG.

The protein resides in the membrane. This Pongo abelii (Sumatran orangutan) protein is Ankyrin repeat domain-containing protein 46 (ANKRD46).